Consider the following 479-residue polypeptide: Glutamyl-tRNA(Gln) amidotransferase subunit A (479 aa).

Residues lysine 74 and serine 149 each act as charge relay system in the active site. Serine 173 (acyl-ester intermediate) is an active-site residue.

Belongs to the amidase family. GatA subfamily. Heterotrimer of A, B and C subunits.

The enzyme catalyses L-glutamyl-tRNA(Gln) + L-glutamine + ATP + H2O = L-glutaminyl-tRNA(Gln) + L-glutamate + ADP + phosphate + H(+). Its function is as follows. Allows the formation of correctly charged Gln-tRNA(Gln) through the transamidation of misacylated Glu-tRNA(Gln) in organisms which lack glutaminyl-tRNA synthetase. The reaction takes place in the presence of glutamine and ATP through an activated gamma-phospho-Glu-tRNA(Gln). This chain is Glutamyl-tRNA(Gln) amidotransferase subunit A, found in Cenarchaeum symbiosum (strain A).